A 447-amino-acid polypeptide reads, in one-letter code: Putative short-chain fatty acid transporter (447 aa).

11 helical membrane-spanning segments follow: residues 17-37 (LPDP…CAWG), 49-69 (MWGN…LIVV), 98-118 (VVLV…FGLV), 136-156 (YALL…GFSG), 188-208 (TLFS…LPFI), 252-272 (FLAY…FYKN), 284-304 (IFLI…RAII), 321-341 (AGVQ…EFFI), 359-379 (FINF…PFVI), 402-422 (WMNM…GLGV), and 427-447 (GFCM…LYFL).

It localises to the cell inner membrane. Functionally, may be responsible for the uptake of short-chain fatty acids. The polypeptide is Putative short-chain fatty acid transporter (atoE) (Haemophilus influenzae (strain ATCC 51907 / DSM 11121 / KW20 / Rd)).